The following is a 215-amino-acid chain: MGKGDPKKPRGKMSSYAFFVQTCREEHKKKHPDASVNFSEFSKKCSERWKTMSAKEKGKFEDMAKADKARYEREMKTYIPPKGETKKKFKDPNAPKRPPSAFFLFCSEYRPKIKGEHPGLSIGDVAKKLGEMWNNTAADDKQPYEKKAAKLKEKYEKDIAAYRAKGKPDAAKKGVVKAEKSKKKKEEEDDEEDEEDEEEEEEEEDEDEEEDDDDE.

1-10 lines the heparin pocket; sequence MGKGDPKKPR. The interval 1-97 is sufficient for interaction with HAVCR2; sequence MGKGDPKKPR…KFKDPNAPKR (97 aa). N6-acetyllysine occurs at positions 3, 7, 8, and 12. The LPS binding (delipidated) stretch occupies residues 3-15; it reads KGDPKKPRGKMSS. Positions 9–79 form a DNA-binding region, HMG box 1; it reads PRGKMSSYAF…RYEREMKTYI (71 aa). Position 23 is a cysteine sulfonic acid (-SO3H); alternate (Cys23). An intrachain disulfide couples Cys23 to Cys45. The interval 27-43 is NLS 1; sequence HKKKHPDASVNFSEFSK. A Nuclear localization signal (NLS) 1 motif is present at residues 27-43; sequence HKKKHPDASVNFSEFSK. N6-acetyllysine is present on residues Lys28, Lys29, and Lys30. An Isoglutamyl lysine isopeptide (Lys-Gln) (interchain with Q-?) cross-link involves residue Lys28. Residue Ser35 is modified to Phosphoserine. Lys43 carries the N6-acetyllysine modification. Isoglutamyl lysine isopeptide (Lys-Gln) (interchain with Q-?) cross-links involve residues Lys43 and Lys44. Cys45 carries the cysteine sulfonic acid (-SO3H); alternate modification. Residue Lys68 forms an Isoglutamyl lysine isopeptide (Lys-Gln) (interchain with Q-?) linkage. Residues 76–95 form a disordered region; that stretch reads KTYIPPKGETKKKFKDPNAP. Residues 80-96 are LPS binding (Lipid A); the sequence is PPKGETKKKFKDPNAPK. The segment covering 83-94 has biased composition (basic and acidic residues); sequence GETKKKFKDPNA. Residues 89–108 are cytokine-stimulating activity; sequence FKDPNAPKRPPSAFFLFCSE. Lys90 is subject to N6-acetyllysine. Residues 95–163 constitute a DNA-binding region (HMG box 2); it reads PKRPPSAFFL…KYEKDIAAYR (69 aa). A Phosphoserine modification is found at Ser100. Cys106 is modified (cysteine sulfonic acid (-SO3H)). N6-acetyllysine occurs at positions 127, 128, 141, 172, 173, 177, and 180. The tract at residues 150 to 183 is binding to AGER/RAGE; sequence KLKEKYEKDIAAYRAKGKPDAAKKGVVKAEKSKK. The span at 161–179 shows a compositional bias: basic and acidic residues; it reads AYRAKGKPDAAKKGVVKAE. The segment at 161 to 215 is disordered; that stretch reads AYRAKGKPDAAKKGVVKAEKSKKKKEEEDDEEDEEDEEEEEEEEDEDEEEDDDDE. The interval 178–184 is NLS 2; sequence AEKSKKK. The Nuclear localization signal (NLS) 2 signature appears at 178-184; that stretch reads AEKSKKK. Residue Lys180 forms an Isoglutamyl lysine isopeptide (Lys-Gln) (interchain with Q-?) linkage. ADP-ribosylserine is present on Ser181. N6-acetyllysine occurs at positions 182, 183, 184, and 185. Residues Lys182, Lys183, and Lys184 each participate in an isoglutamyl lysine isopeptide (Lys-Gln) (interchain with Q-?) cross-link. A compositionally biased stretch (acidic residues) spans 187–215; the sequence is EEDDEEDEEDEEEEEEEEDEDEEEDDDDE.

The protein belongs to the HMGB family. As to quaternary structure, interacts (fully reduced HMGB1) with CXCL12; probably in a 1:2 ratio involving two molecules of CXCL12, each interacting with one HMG box of HMGB1; inhibited by glycyrrhizin. Associates with the TLR4:LY96 receptor complex. Component of the RAG complex composed of core components RAG1 and RAG2, and associated component HMGB1 or HMGB2. Interacts (in cytoplasm upon starvation) with BECN1; inhibits the interaction of BECN1 and BCL2 leading to promotion of autophagy. Interacts with KPNA1; involved in nuclear import. Interacts with SREBF1, TLR2, TLR4, TLR9, APEX1, FEN1, POLB, TERT. Interacts with AGER, PTPRZ1, IL1B, MSH2, XPA, XPC, HNF1A, TP53. Interacts with CD24; the probable CD24:SIGLEC10 complex is proposed to inhibit HGMB1-mediated tissue damage immune response. Interacts with THBD; prevents HGMB1 interaction with ACER/RAGE and inhibits HGMB1 pro-inflammatory activity. Interacts with HAVCR2; impairs HMGB1 binding to B-DNA and likely HMGB1-mediated innate immune response. Interacts with XPO1; mediating nuclear export. Interacts with receptor RAGE/AGER. Acetylated on multiple sites upon stimulation with LPS. Acetylation on lysine residues in the nuclear localization signals (NLS 1 and NLS 2) leads to cytoplasmic localization and subsequent secretion. Acetylation on Lys-3 results in preferential binding to DNA ends and impairs DNA bending activity. Post-translationally, phosphorylated at serine residues. Phosphorylation in both NLS regions is required for cytoplasmic translocation followed by secretion. In terms of processing, reduction/oxidation of cysteine residues Cys-23, Cys-45 and Cys-106 and a possible intramolecular disulfide bond involving Cys-23 and Cys-45 give rise to different redox forms with specific functional activities in various cellular compartments: 1- Fully reduced HGMB1 (HMGB1C23hC45hC106h), 2- Disulfide HMGB1 (HMGB1C23-C45C106h) and 3- Sulfonyl HMGB1 (HMGB1C23soC45soC106so). Poly-ADP-ribosylated by PARP1 when secreted following stimulation with LPS. Post-translationally, in vitro cleavage by CASP1 is liberating a HMG box 1-containing peptide which may mediate immunogenic activity; the peptide antagonizes apoptosis-induced immune tolerance. Can be proteolytically cleaved by a thrombin:thrombomodulin complex; reduces binding to heparin and pro-inflammatory activities. In terms of processing, forms covalent cross-links mediated by transglutaminase TGM2, between a glutamine and the epsilon-amino group of a lysine residue, forming homopolymers and heteropolymers. In terms of tissue distribution, serum levels are found elevated in mice with modeled systemic lupus erythematosus (SLE) and are correlated with SLE disease activity.

The protein resides in the nucleus. It is found in the cytoplasm. The protein localises to the chromosome. Its subcellular location is the cell membrane. It localises to the endosome. The protein resides in the endoplasmic reticulum-Golgi intermediate compartment. It is found in the secreted. Its function is as follows. Multifunctional redox sensitive protein with various roles in different cellular compartments. In the nucleus is one of the major chromatin-associated non-histone proteins and acts as a DNA chaperone involved in replication, transcription, chromatin remodeling, V(D)J recombination, DNA repair and genome stability. Proposed to be an universal biosensor for nucleic acids. Promotes host inflammatory response to sterile and infectious signals and is involved in the coordination and integration of innate and adaptive immune responses. In the cytoplasm functions as a sensor and/or chaperone for immunogenic nucleic acids implicating the activation of TLR9-mediated immune responses, and mediates autophagy. Acts as a danger associated molecular pattern (DAMP) molecule that amplifies immune responses during tissue injury. Released to the extracellular environment can bind DNA, nucleosomes, IL-1 beta, CXCL12, AGER isoform 2/sRAGE, lipopolysaccharide (LPS) and lipoteichoic acid (LTA), and activates cells through engagement of multiple surface receptors. In the extracellular compartment fully reduced HMGB1 (released by necrosis) acts as a chemokine, disulfide HMGB1 (actively secreted) as a cytokine, and sulfonyl HMGB1 (released from apoptotic cells) promotes immunological tolerance. Has proangiogenic activity. May be involved in platelet activation. Binds to phosphatidylserine and phosphatidylethanolamide. Bound to RAGE mediates signaling for neuronal outgrowth. May play a role in accumulation of expanded polyglutamine (polyQ) proteins. In terms of biological role, nuclear functions are attributed to fully reduced HGMB1. Associates with chromatin and binds DNA with a preference to non-canonical DNA structures such as single-stranded DNA, DNA-containing cruciforms or bent structures, supercoiled DNA and ZDNA. Can bent DNA and enhance DNA flexibility by looping thus providing a mechanism to promote activities on various gene promoters by enhancing transcription factor binding and/or bringing distant regulatory sequences into close proximity. May be involved in nucleotide excision repair (NER), mismatch repair (MMR) and base excision repair (BER) pathways, and double strand break repair such as non-homologous end joining (NHEJ). Involved in V(D)J recombination by acting as a cofactor of the RAG complex: acts by stimulating cleavage and RAG protein binding at the 23 bp spacer of conserved recombination signal sequences (RSS). In vitro can displace histone H1 from highly bent DNA. Can restructure the canonical nucleosome leading to relaxation of structural constraints for transcription factor-binding. Enhances binding of sterol regulatory element-binding proteins (SREBPs) such as SREBF1 to their cognate DNA sequences and increases their transcriptional activities. Facilitates binding of TP53 to DNA. Proposed to be involved in mitochondrial quality control and autophagy in a transcription-dependent fashion implicating HSPB1; however, this function has been questioned. Can modulate the activity of the telomerase complex and may be involved in telomere maintenance. In the cytoplasm proposed to dissociate the BECN1:BCL2 complex via competitive interaction with BECN1 leading to autophagy activation. Can protect BECN1 and ATG5 from calpain-mediated cleavage and thus proposed to control their proautophagic and proapoptotic functions and to regulate the extent and severity of inflammation-associated cellular injury. In myeloid cells has a protective role against endotoxemia and bacterial infection by promoting autophagy. Involved in endosomal translocation and activation of TLR9 in response to CpG-DNA in macrophages. Functionally, in the extracellular compartment (following either active secretion or passive release) involved in regulation of the inflammatory response. Fully reduced HGMB1 (which subsequently gets oxidized after release) in association with CXCL12 mediates the recruitment of inflammatory cells during the initial phase of tissue injury; the CXCL12:HMGB1 complex triggers CXCR4 homodimerization. Induces the migration of monocyte-derived immature dendritic cells and seems to regulate adhesive and migratory functions of neutrophils implicating AGER/RAGE and ITGAM. Can bind to various types of DNA and RNA including microbial unmethylated CpG-DNA to enhance the innate immune response to nucleic acids. Proposed to act in promiscuous DNA/RNA sensing which cooperates with subsequent discriminative sensing by specific pattern recognition receptors. Promotes extracellular DNA-induced AIM2 inflammasome activation implicating AGER/RAGE. Disulfide HMGB1 binds to transmembrane receptors, such as AGER/RAGE, TLR2, TLR4 and probably TREM1, thus activating their signal transduction pathways. Mediates the release of cytokines/chemokines such as TNF, IL-1, IL-6, IL-8, CCL2, CCL3, CCL4 and CXCL10. Promotes secretion of interferon-gamma by macrophage-stimulated natural killer (NK) cells in concert with other cytokines like IL-2 or IL-12. TLR4 is proposed to be the primary receptor promoting macrophage activation and signaling through TLR4 seems to implicate LY96/MD-2. In bacterial LPS- or LTA-mediated inflammatory responses binds to the endotoxins and transfers them to CD14 for signaling to the respective TLR4:LY96 and TLR2 complexes. Contributes to tumor proliferation by association with ACER/RAGE. Can bind to IL1-beta and signals through the IL1R1:IL1RAP receptor complex. Binding to class A CpG activates cytokine production in plasmacytoid dendritic cells implicating TLR9, MYD88 and AGER/RAGE and can activate autoreactive B cells. Via HMGB1-containing chromatin immune complexes may also promote B cell responses to endogenous TLR9 ligands through a B-cell receptor (BCR)-dependent and ACER/RAGE-independent mechanism. Inhibits phagocytosis of apoptotic cells by macrophages; the function is dependent on poly-ADP-ribosylation and involves binding to phosphatidylserine on the cell surface of apoptotic cells. In adaptive immunity may be involved in enhancing immunity through activation of effector T-cells and suppression of regulatory T (TReg) cells. In contrast, without implicating effector or regulatory T-cells, required for tumor infiltration and activation of T-cells expressing the lymphotoxin LTA:LTB heterotrimer thus promoting tumor malignant progression. Also reported to limit proliferation of T-cells. Released HMGB1:nucleosome complexes formed during apoptosis can signal through TLR2 to induce cytokine production. Involved in induction of immunological tolerance by apoptotic cells; its pro-inflammatory activities when released by apoptotic cells are neutralized by reactive oxygen species (ROS)-dependent oxidation specifically on Cys-106. During macrophage activation by activated lymphocyte-derived self apoptotic DNA (ALD-DNA) promotes recruitment of ALD-DNA to endosomes. This chain is High mobility group protein B1 (Hmgb1), found in Mus musculus (Mouse).